A 610-amino-acid polypeptide reads, in one-letter code: DNA mismatch repair protein MutL (610 aa).

Residues 351–406 (GQRPQAPWSAETSPSRPYQPAPAFSERPQASFDGLSTPTARAEPQFSPDPVSPGLA) are disordered.

The protein belongs to the DNA mismatch repair MutL/HexB family.

In terms of biological role, this protein is involved in the repair of mismatches in DNA. It is required for dam-dependent methyl-directed DNA mismatch repair. May act as a 'molecular matchmaker', a protein that promotes the formation of a stable complex between two or more DNA-binding proteins in an ATP-dependent manner without itself being part of a final effector complex. This Rhizobium etli (strain ATCC 51251 / DSM 11541 / JCM 21823 / NBRC 15573 / CFN 42) protein is DNA mismatch repair protein MutL.